An 873-amino-acid polypeptide reads, in one-letter code: Alanine--tRNA ligase (873 aa).

The Zn(2+) site is built by His-563, His-567, Cys-664, and His-668.

It belongs to the class-II aminoacyl-tRNA synthetase family. It depends on Zn(2+) as a cofactor.

Its subcellular location is the cytoplasm. The catalysed reaction is tRNA(Ala) + L-alanine + ATP = L-alanyl-tRNA(Ala) + AMP + diphosphate. Its function is as follows. Catalyzes the attachment of alanine to tRNA(Ala) in a two-step reaction: alanine is first activated by ATP to form Ala-AMP and then transferred to the acceptor end of tRNA(Ala). Also edits incorrectly charged Ser-tRNA(Ala) and Gly-tRNA(Ala) via its editing domain. The polypeptide is Alanine--tRNA ligase (Aromatoleum aromaticum (strain DSM 19018 / LMG 30748 / EbN1) (Azoarcus sp. (strain EbN1))).